Consider the following 148-residue polypeptide: [Ribosomal protein bS18]-alanine N-acetyltransferase (148 aa).

Positions 2–147 (NTISILSTTD…DAIIMALPIS (146 aa)) constitute an N-acetyltransferase domain. Residues 69 to 71 (IAV) and 77 to 82 (RRGLGR) contribute to the acetyl-CoA site. E103 serves as the catalytic Proton acceptor. An acetyl-CoA-binding site is contributed by N108. Y115 (proton donor) is an active-site residue.

The protein belongs to the acetyltransferase family. RimI subfamily.

Its subcellular location is the cytoplasm. It catalyses the reaction N-terminal L-alanyl-[ribosomal protein bS18] + acetyl-CoA = N-terminal N(alpha)-acetyl-L-alanyl-[ribosomal protein bS18] + CoA + H(+). Functionally, acetylates the N-terminal alanine of ribosomal protein bS18. The sequence is that of [Ribosomal protein bS18]-alanine N-acetyltransferase from Salmonella typhimurium (strain LT2 / SGSC1412 / ATCC 700720).